Reading from the N-terminus, the 309-residue chain is D-alanine--D-alanine ligase (309 aa).

Positions 105 to 304 (KQIWHSVGLP…FNDLVERILA (200 aa)) constitute an ATP-grasp domain. Position 135–190 (135–190 (LQELGGRVIVKPAREGSSIGMSIADNGRSLALALQHAAEFDDDLLVEQWVEGAEYT)) interacts with ATP. Mg(2+) is bound by residues Asp-258, Glu-271, and Asn-273.

Belongs to the D-alanine--D-alanine ligase family. Requires Mg(2+) as cofactor. Mn(2+) serves as cofactor.

It localises to the cytoplasm. It carries out the reaction 2 D-alanine + ATP = D-alanyl-D-alanine + ADP + phosphate + H(+). It functions in the pathway cell wall biogenesis; peptidoglycan biosynthesis. Cell wall formation. This chain is D-alanine--D-alanine ligase, found in Idiomarina loihiensis (strain ATCC BAA-735 / DSM 15497 / L2-TR).